We begin with the raw amino-acid sequence, 1392 residues long: DNA-directed RNA polymerase subunit beta (1392 aa).

Positions 1372-1392 are disordered; the sequence is LSSYAEEDPDEGPEALPEAAE.

This sequence belongs to the RNA polymerase beta chain family. In terms of assembly, the RNAP catalytic core consists of 2 alpha, 1 beta, 1 beta' and 1 omega subunit. When a sigma factor is associated with the core the holoenzyme is formed, which can initiate transcription.

It catalyses the reaction RNA(n) + a ribonucleoside 5'-triphosphate = RNA(n+1) + diphosphate. Its function is as follows. DNA-dependent RNA polymerase catalyzes the transcription of DNA into RNA using the four ribonucleoside triphosphates as substrates. In Sphingopyxis alaskensis (strain DSM 13593 / LMG 18877 / RB2256) (Sphingomonas alaskensis), this protein is DNA-directed RNA polymerase subunit beta.